Reading from the N-terminus, the 177-residue chain is Large ribosomal subunit protein bL19 (177 aa).

It belongs to the bacterial ribosomal protein bL19 family.

In terms of biological role, this protein is located at the 30S-50S ribosomal subunit interface and may play a role in the structure and function of the aminoacyl-tRNA binding site. In Sinorhizobium medicae (strain WSM419) (Ensifer medicae), this protein is Large ribosomal subunit protein bL19.